Consider the following 129-residue polypeptide: UPF0102 protein RD1_1191 (129 aa).

It belongs to the UPF0102 family.

This chain is UPF0102 protein RD1_1191, found in Roseobacter denitrificans (strain ATCC 33942 / OCh 114) (Erythrobacter sp. (strain OCh 114)).